A 417-amino-acid polypeptide reads, in one-letter code: Serine--tRNA ligase (417 aa).

L-serine is bound at residue 232 to 234 (TSE). 263–265 (RKE) is an ATP binding site. Residue Glu-286 coordinates L-serine. Residue 350-353 (EISS) coordinates ATP. Residue Ser-385 participates in L-serine binding.

This sequence belongs to the class-II aminoacyl-tRNA synthetase family. Type-1 seryl-tRNA synthetase subfamily. In terms of assembly, homodimer. The tRNA molecule binds across the dimer.

Its subcellular location is the cytoplasm. The enzyme catalyses tRNA(Ser) + L-serine + ATP = L-seryl-tRNA(Ser) + AMP + diphosphate + H(+). It carries out the reaction tRNA(Sec) + L-serine + ATP = L-seryl-tRNA(Sec) + AMP + diphosphate + H(+). It functions in the pathway aminoacyl-tRNA biosynthesis; selenocysteinyl-tRNA(Sec) biosynthesis; L-seryl-tRNA(Sec) from L-serine and tRNA(Sec): step 1/1. Functionally, catalyzes the attachment of serine to tRNA(Ser). Is also able to aminoacylate tRNA(Sec) with serine, to form the misacylated tRNA L-seryl-tRNA(Sec), which will be further converted into selenocysteinyl-tRNA(Sec). The polypeptide is Serine--tRNA ligase (Campylobacter hominis (strain ATCC BAA-381 / DSM 21671 / CCUG 45161 / LMG 19568 / NCTC 13146 / CH001A)).